The chain runs to 204 residues: LexA repressor (204 aa).

The H-T-H motif DNA-binding region spans 30-50 (IREICQGVGLSSPSTVHHHLK). Active-site for autocatalytic cleavage activity residues include S125 and K162.

This sequence belongs to the peptidase S24 family. As to quaternary structure, homodimer.

It catalyses the reaction Hydrolysis of Ala-|-Gly bond in repressor LexA.. In terms of biological role, represses a number of genes involved in the response to DNA damage (SOS response), including recA and lexA. In the presence of single-stranded DNA, RecA interacts with LexA causing an autocatalytic cleavage which disrupts the DNA-binding part of LexA, leading to derepression of the SOS regulon and eventually DNA repair. The chain is LexA repressor from Carboxydothermus hydrogenoformans (strain ATCC BAA-161 / DSM 6008 / Z-2901).